A 320-amino-acid polypeptide reads, in one-letter code: Ferrochelatase (320 aa).

Fe cation is bound by residues histidine 194 and glutamate 272.

It belongs to the ferrochelatase family.

Its subcellular location is the cytoplasm. It catalyses the reaction heme b + 2 H(+) = protoporphyrin IX + Fe(2+). It functions in the pathway porphyrin-containing compound metabolism; protoheme biosynthesis; protoheme from protoporphyrin-IX: step 1/1. Its function is as follows. Catalyzes the ferrous insertion into protoporphyrin IX. The polypeptide is Ferrochelatase (Desulfotalea psychrophila (strain LSv54 / DSM 12343)).